A 483-amino-acid polypeptide reads, in one-letter code: UDP-N-acetylmuramoyl-L-alanyl-D-glutamate--2,6-diaminopimelate ligase (483 aa).

S29 provides a ligand contact to UDP-N-acetyl-alpha-D-muramoyl-L-alanyl-D-glutamate. 107 to 113 (GTSGKTS) serves as a coordination point for ATP. Residues 149–150 (TT), S176, Q182, and R184 contribute to the UDP-N-acetyl-alpha-D-muramoyl-L-alanyl-D-glutamate site. K216 is modified (N6-carboxylysine). Meso-2,6-diaminopimelate-binding positions include R380, 404 to 407 (DNPR), G452, and E456. The Meso-diaminopimelate recognition motif motif lies at 404–407 (DNPR).

This sequence belongs to the MurCDEF family. MurE subfamily. It depends on Mg(2+) as a cofactor. Carboxylation is probably crucial for Mg(2+) binding and, consequently, for the gamma-phosphate positioning of ATP.

The protein localises to the cytoplasm. It catalyses the reaction UDP-N-acetyl-alpha-D-muramoyl-L-alanyl-D-glutamate + meso-2,6-diaminopimelate + ATP = UDP-N-acetyl-alpha-D-muramoyl-L-alanyl-gamma-D-glutamyl-meso-2,6-diaminopimelate + ADP + phosphate + H(+). The protein operates within cell wall biogenesis; peptidoglycan biosynthesis. Catalyzes the addition of meso-diaminopimelic acid to the nucleotide precursor UDP-N-acetylmuramoyl-L-alanyl-D-glutamate (UMAG) in the biosynthesis of bacterial cell-wall peptidoglycan. The protein is UDP-N-acetylmuramoyl-L-alanyl-D-glutamate--2,6-diaminopimelate ligase of Chelativorans sp. (strain BNC1).